A 432-amino-acid chain; its full sequence is MEKLTLTPISRVEGEINLPGSKSLSNRALLLAALATGTTQVTNLLDSDDIRHMLNALKALGVKYELSDDKTVCVVEGIGGAFKVQNGLSLFLGNAGTAMRPLAAALCLKGAETAQIILTGEPRMKERPIKHLVDALRQVGAEVQYLENEGYPPLAISNSGLQGGKVQIDGSISSQFLTALLMSAPLAESDMEIEIIGDLVSKPYIDITLSMMNDFGITVENRDYKTFLVKGKQGYVAPQGNYLVEGDASSASYFLASGAIKGKVKVTGIGKKSIQGDRLFADVLEKMGAKITWGEDFIQAEQSPLKGVDMDMNHIPDAAMTIATTALFAEGETVIRNIYNWRVKETDRLTAMATELRKVGAEVEEGEDFIRIQPLALENFQHAEIETYNDHRMAMCFSLIALSNTEVTILDPNCTAKTFPTYFRELEKLSVR.

3-phosphoshikimate contacts are provided by Lys-22, Ser-23, and Arg-27. Residue Lys-22 participates in phosphoenolpyruvate binding. 2 residues coordinate phosphoenolpyruvate: Gly-96 and Arg-127. Positions 173, 174, 175, 201, 317, 340, and 344 each coordinate 3-phosphoshikimate. Gln-175 contacts phosphoenolpyruvate. Asp-317 functions as the Proton acceptor in the catalytic mechanism. Residues Arg-348, Arg-392, and Lys-417 each coordinate phosphoenolpyruvate.

Belongs to the EPSP synthase family. As to quaternary structure, monomer.

The protein resides in the cytoplasm. The enzyme catalyses 3-phosphoshikimate + phosphoenolpyruvate = 5-O-(1-carboxyvinyl)-3-phosphoshikimate + phosphate. Its pathway is metabolic intermediate biosynthesis; chorismate biosynthesis; chorismate from D-erythrose 4-phosphate and phosphoenolpyruvate: step 6/7. Functionally, catalyzes the transfer of the enolpyruvyl moiety of phosphoenolpyruvate (PEP) to the 5-hydroxyl of shikimate-3-phosphate (S3P) to produce enolpyruvyl shikimate-3-phosphate and inorganic phosphate. This Mannheimia haemolytica (Pasteurella haemolytica) protein is 3-phosphoshikimate 1-carboxyvinyltransferase.